Here is a 457-residue protein sequence, read N- to C-terminus: MSSTMKDTQEAPVRWSRNWTPDAIRALVDQDNGKLDARIYADQDLYQLELERVFGRSWLMLGHETHIPKIGDYLTTYMGEDPVIMVRQKDQSIKVFLNQCRHRGMRIVRSDGGNAKAFTCTYHGWAYDIAGNLVNVPFEKEAFCDKKEGDCGFDKADWGPLQARVETYKGLVFANWDPEAPDLKTYLSDAMPYMDVMLDRTEAGTEAIGGIQKWVIPCNWKFAAEQFCSDMYHAGTMSHLSGVLAGLPPEMDLTQIQLSKNGNQFRSAWGGHGAGWFINDSSILLSVVGPKITQYWTQGPAAEKAARRVPQLPILDMFGQHMTVFPTCSFLPGINTIRTWHPRGPNEVEVWAFVLVDADAPEDIKEEFRLQNIRTFNAGGVFEQDDGENWVEIQRVMRGHKAKSTSLCAKMGLNVPNKNNPAYPGKTAYVYAEEAARGMYHHWSRMMSEPSWDTLKP.

The Rieske domain occupies 58-174 (WLMLGHETHI…VETYKGLVFA (117 aa)). [2Fe-2S] cluster-binding residues include Cys100, His102, Cys120, and His123. Residues His233 and His239 each coordinate Fe cation.

This sequence belongs to the bacterial ring-hydroxylating dioxygenase alpha subunit family. As to quaternary structure, heterohexamer consisting of three BphA subunits and three BphE subunits. A ferredoxin (BphF) and a ferredoxin reductase (BphG) must be present to obtain activity. [2Fe-2S] cluster serves as cofactor. The cofactor is Fe cation.

It carries out the reaction biphenyl + NADH + O2 + H(+) = (2R,3S)-3-phenylcyclohexa-3,5-diene-1,2-diol + NAD(+). The protein operates within xenobiotic degradation; biphenyl degradation; 2-hydroxy-2,4-pentadienoate and benzoate from biphenyl: step 1/4. The sequence is that of Biphenyl dioxygenase subunit alpha (bphA) from Comamonas testosteroni (Pseudomonas testosteroni).